The chain runs to 681 residues: tRNA wybutosine-synthesizing protein 4 (681 aa).

The segment covering 1 to 11 (MSNKNQRKTKS) has biased composition (basic residues). A disordered region spans residues 1–21 (MSNKNQRKTKSKDREVRKTND). Residues Arg66, Gly92, Asp119, 165 to 166 (NL), and Glu193 contribute to the S-adenosyl-L-methionine site.

It belongs to the methyltransferase superfamily. LCMT family.

It carries out the reaction 7-[(3S)-3-amino-3-carboxypropyl]wyosine(37) in tRNA(Phe) + S-adenosyl-L-methionine = 7-[(3S)-(3-amino-3-methoxycarbonyl)propyl]wyosine(37) in tRNA(Phe) + S-adenosyl-L-homocysteine. The enzyme catalyses 7-[(3S)-(3-amino-3-methoxycarbonyl)propyl]wyosine(37) in tRNA(Phe) + S-adenosyl-L-methionine + CO2 = wybutosine(37) in tRNA(Phe) + S-adenosyl-L-homocysteine + 2 H(+). Its pathway is tRNA modification; wybutosine-tRNA(Phe) biosynthesis. Probable S-adenosyl-L-methionine-dependent methyltransferase that acts as a component of the wybutosine biosynthesis pathway. Wybutosine is a hyper modified guanosine with a tricyclic base found at the 3'-position adjacent to the anticodon of eukaryotic phenylalanine tRNA. May methylate the carboxyl group of leucine residues to form alpha-leucine ester residues. The chain is tRNA wybutosine-synthesizing protein 4 (ppm2) from Schizosaccharomyces pombe (strain 972 / ATCC 24843) (Fission yeast).